A 347-amino-acid polypeptide reads, in one-letter code: CDK2-associated and cullin domain-containing protein 1 (347 aa).

Residues 1 to 11 are compositionally biased toward acidic residues; the sequence is MEESMEEEEML. 2 disordered regions span residues 1–63 and 320–347; these read MEES…LPGG and RGDQSRKRAGDELAYNSPSACASSRGYR. Pro residues predominate over residues 34–49; sequence QPPPAPPLPPPPPPRP.

It belongs to the cullin family. Interacts with CDK2.

Its function is as follows. Cell cycle associated protein capable of promoting cell proliferation through the activation of CDK2 at the G1/S phase transition. In Rattus norvegicus (Rat), this protein is CDK2-associated and cullin domain-containing protein 1 (Cacul1).